The chain runs to 94 residues: Acylphosphatase (94 aa).

Residues 8–94 form the Acylphosphatase-like domain; sequence RFTARVVGRV…QGDLADFRRK (87 aa). Catalysis depends on residues Arg-23 and Asn-41.

This sequence belongs to the acylphosphatase family.

The catalysed reaction is an acyl phosphate + H2O = a carboxylate + phosphate + H(+). This chain is Acylphosphatase (acyP), found in Frankia alni (strain DSM 45986 / CECT 9034 / ACN14a).